A 274-amino-acid chain; its full sequence is Large ribosomal subunit protein uL2 (274 aa).

Disordered stretches follow at residues 1 to 23 and 222 to 242; these read MAIKIYRPTSPGRRHHSVSSFEE and GSAMSPNNHPHGGGECRSPIG.

It belongs to the universal ribosomal protein uL2 family. In terms of assembly, part of the 50S ribosomal subunit. Forms a bridge to the 30S subunit in the 70S ribosome.

In terms of biological role, one of the primary rRNA binding proteins. Required for association of the 30S and 50S subunits to form the 70S ribosome, for tRNA binding and peptide bond formation. It has been suggested to have peptidyltransferase activity; this is somewhat controversial. Makes several contacts with the 16S rRNA in the 70S ribosome. The sequence is that of Large ribosomal subunit protein uL2 from Dehalococcoides mccartyi (strain ATCC BAA-2266 / KCTC 15142 / 195) (Dehalococcoides ethenogenes (strain 195)).